The following is a 4118-amino-acid chain: BEACH domain-containing protein lvsB (4118 aa).

The disordered stretch occupies residues 1–35 (MNRNFNNINNNNNNNNNYHGYQYHQQQQQQNQQQQ). Residues 198–218 (GIPLSFLNFLITILLRILSLP) traverse the membrane as a helical segment. The segment covering 236 to 257 (NFSGNNNNNFNNNNHYFNNNHN) has biased composition (low complexity). Disordered stretches follow at residues 236–267 (NFSGNNNNNFNNNNHYFNNNHNNHNHHYQHHQ), 332–382 (PLSS…SKNN), and 621–644 (ISSSDNNNNNNNNSDGVNDDKNNN). A compositionally biased stretch (basic residues) spans 258 to 267 (NHNHHYQHHQ). 2 stretches are compositionally biased toward low complexity: residues 332 to 381 (PLSS…NSKN) and 621 to 636 (ISSSDNNNNNNNNSDG). Residues 827 to 847 (YLVLYMIVTEILSLLLELLVP) traverse the membrane as a helical segment. Low complexity predominate over residues 1155-1170 (NGGSISPSSIINNMNS). Disordered stretches follow at residues 1155–1213 (NGGS…FNNN), 1599–1622 (ANTTTNSTTASTTTTTTNSTTAVS), 1643–1681 (NSGISRENSLGGRDSIGSNSSSSSSSSNSGVSSGSSTNL), 1928–1968 (GNFL…ISSS), 2015–2044 (STNNNSNNSNNSNSNNNNNNNNTNYNSNSL), 2537–2574 (RRGSSSSSTNSTTNNNNNNSSTTTTSNNNNNNNENNNE), 2702–2741 (FSPSRSKEKEKEKEKEKEKEKEKEKERERERETTNVTSDS), 2754–2791 (DQSNEESSTTDSDSTSDNNNNNNRNSYSGRNIRGNGIN), 2902–3007 (NTNS…NSNE), 3245–3265 (PLIPDLSTPSTPPSPQNTKDQ), and 3348–3418 (KTTA…NIVK). Composition is skewed to low complexity over residues 1657–1678 (SIGSNSSSSSSSSNSGVSSGSS) and 1935–1968 (SSSNNNLRERSINNNNNNNNNSNNNNNNNSISSS). Positions 2540 to 2571 (SSSSSTNSTTNNNNNNSSTTTTSNNNNNNNEN) are enriched in low complexity. The stretch at 2705–2738 (SRSKEKEKEKEKEKEKEKEKEKERERERETTNVT) forms a coiled coil. A compositionally biased stretch (basic and acidic residues) spans 2706 to 2734 (RSKEKEKEKEKEKEKEKEKEKERERERET). 2 stretches are compositionally biased toward low complexity: residues 2758-2791 (EESSTTDSDSTSDNNNNNNRNSYSGRNIRGNGIN) and 2902-2947 (NTNS…NSTN). Residues 2948-2962 (QTITDTTLSPASSNV) show a composition bias toward polar residues. Composition is skewed to low complexity over residues 2963-2980 (SISNQSTPISNNNNNNNS) and 2988-3006 (SNINIPPTINISDSNSNSN). The region spanning 3303-3479 (KLGEKVNEVF…DRDIVYDLIM (177 aa)) is the BEACH-type PH domain. A compositionally biased stretch (low complexity) spans 3357–3411 (SNNNNNNNNNNNNNNNNNNNNSNDTTSSINSTTATNTNTTNTTTTNTTTTTTTTN). In terms of domain architecture, BEACH spans 3491 to 3782 (AEVHGNILKM…QIFTKPHPKK (292 aa)). 5 WD repeats span residues 3868 to 3907 (VLNDDIICGDITKNGRLFVTGGTAGTVKVWKRCNNDGTIM), 3924 to 3963 (GHTNSILCVTVSQEYSIIVSGSKDSNCIIWDLNRLTYINS), 3984 to 4027 (TFET…LAKQ), 4029 to 4073 (FVND…KIRT), and 4075 to 4114 (VSKSTITALAVSKDNTQLISGDINGLIECLSSRSFDGYSS).

Its subcellular location is the membrane. It is found in the lysosome. It localises to the endosome. Its function is as follows. Involved in negative regulation of lysosome biogenesis, by limiting the heterotypic fusion of early endosomes and postlysosomal compartments. The protein is BEACH domain-containing protein lvsB (lvsB) of Dictyostelium discoideum (Social amoeba).